A 331-amino-acid polypeptide reads, in one-letter code: Ketol-acid reductoisomerase (NADP(+)) (331 aa).

Positions 2–182 (AKLFYDSDAD…GGTRAGILET (181 aa)) constitute a KARI N-terminal Rossmann domain. NADP(+) contacts are provided by residues 25–28 (YGSQ), Ser51, Ser53, and 83–86 (DEFQ). His108 is a catalytic residue. Gly134 contacts NADP(+). Positions 183 to 328 (NFKEETETDL…KTLRSMFSWL (146 aa)) constitute a KARI C-terminal knotted domain. Residues Asp191, Glu195, Glu227, and Glu231 each coordinate Mg(2+). Residue Ser252 participates in substrate binding.

Belongs to the ketol-acid reductoisomerase family. The cofactor is Mg(2+).

It carries out the reaction (2R)-2,3-dihydroxy-3-methylbutanoate + NADP(+) = (2S)-2-acetolactate + NADPH + H(+). The catalysed reaction is (2R,3R)-2,3-dihydroxy-3-methylpentanoate + NADP(+) = (S)-2-ethyl-2-hydroxy-3-oxobutanoate + NADPH + H(+). Its pathway is amino-acid biosynthesis; L-isoleucine biosynthesis; L-isoleucine from 2-oxobutanoate: step 2/4. It functions in the pathway amino-acid biosynthesis; L-valine biosynthesis; L-valine from pyruvate: step 2/4. Functionally, involved in the biosynthesis of branched-chain amino acids (BCAA). Catalyzes an alkyl-migration followed by a ketol-acid reduction of (S)-2-acetolactate (S2AL) to yield (R)-2,3-dihydroxy-isovalerate. In the isomerase reaction, S2AL is rearranged via a Mg-dependent methyl migration to produce 3-hydroxy-3-methyl-2-ketobutyrate (HMKB). In the reductase reaction, this 2-ketoacid undergoes a metal-dependent reduction by NADPH to yield (R)-2,3-dihydroxy-isovalerate. This chain is Ketol-acid reductoisomerase (NADP(+)), found in Prochlorococcus marinus (strain NATL1A).